The following is a 354-amino-acid chain: Hyaluronan and proteoglycan link protein 1 (354 aa).

Residues 1 to 15 constitute a propeptide that is removed on maturation; sequence MKSLLLLVLISICGA. Residues Asn21 and Asn56 are each glycosylated (N-linked (GlcNAc...) asparagine). The Ig-like V-type domain occupies 38 to 152; that stretch reads PRLLVEAEQA…EGLEDDTAVV (115 aa). 5 disulfide bridges follow: Cys61/Cys139, Cys181/Cys252, Cys205/Cys226, Cys279/Cys349, and Cys304/Cys325. Link domains follow at residues 159–254 and 259–351; these read VVFP…FCFT and GRFY…YCFR.

It belongs to the HAPLN family.

It is found in the secreted. The protein localises to the extracellular space. It localises to the extracellular matrix. Stabilizes the aggregates of proteoglycan monomers with hyaluronic acid in the extracellular cartilage matrix. This Equus caballus (Horse) protein is Hyaluronan and proteoglycan link protein 1 (HAPLN1).